The chain runs to 147 residues: UPF0216 protein MK1676 (147 aa).

This sequence belongs to the UPF0216 family.

This chain is UPF0216 protein MK1676, found in Methanopyrus kandleri (strain AV19 / DSM 6324 / JCM 9639 / NBRC 100938).